A 316-amino-acid polypeptide reads, in one-letter code: HPr kinase/phosphorylase (316 aa).

Catalysis depends on residues H143 and K164. 158–165 is a binding site for ATP; that stretch reads GEAGSGKS. S165 lines the Mg(2+) pocket. The active-site Proton acceptor; for phosphorylation activity. Proton donor; for dephosphorylation activity is the D182. Residues 206–215 are important for the catalytic mechanism of both phosphorylation and dephosphorylation; it reads LEVRGLGVLN. E207 serves as a coordination point for Mg(2+). The active site involves R251. The important for the catalytic mechanism of dephosphorylation stretch occupies residues 272-277; the sequence is PVMPGR.

This sequence belongs to the HPrK/P family. Homohexamer. Mg(2+) serves as cofactor.

The enzyme catalyses [HPr protein]-L-serine + ATP = [HPr protein]-O-phospho-L-serine + ADP + H(+). The catalysed reaction is [HPr protein]-O-phospho-L-serine + phosphate + H(+) = [HPr protein]-L-serine + diphosphate. Its function is as follows. Catalyzes the ATP- as well as the pyrophosphate-dependent phosphorylation of a specific serine residue in HPr, a phosphocarrier protein of the phosphoenolpyruvate-dependent sugar phosphotransferase system (PTS). HprK/P also catalyzes the pyrophosphate-producing, inorganic phosphate-dependent dephosphorylation (phosphorolysis) of seryl-phosphorylated HPr (P-Ser-HPr). This chain is HPr kinase/phosphorylase, found in Stenotrophomonas maltophilia (strain R551-3).